We begin with the raw amino-acid sequence, 172 residues long: Adenine phosphoribosyltransferase (172 aa).

The protein belongs to the purine/pyrimidine phosphoribosyltransferase family. In terms of assembly, homodimer.

It localises to the cytoplasm. It catalyses the reaction AMP + diphosphate = 5-phospho-alpha-D-ribose 1-diphosphate + adenine. It functions in the pathway purine metabolism; AMP biosynthesis via salvage pathway; AMP from adenine: step 1/1. In terms of biological role, catalyzes a salvage reaction resulting in the formation of AMP, that is energically less costly than de novo synthesis. This is Adenine phosphoribosyltransferase from Lactiplantibacillus plantarum (strain ATCC BAA-793 / NCIMB 8826 / WCFS1) (Lactobacillus plantarum).